The primary structure comprises 386 residues: Synaptotagmin-5 (386 aa).

Pro residues predominate over residues 1–16 (MFPEPPTPGPPSPDTP). The interval 1 to 23 (MFPEPPTPGPPSPDTPPDSSRIS) is disordered. The Vesicular segment spans residues 1–24 (MFPEPPTPGPPSPDTPPDSSRISH). The helical transmembrane segment at 25–45 (GPVPPWALATIVLVSGLLIFS) threads the bilayer. Topologically, residues 46–386 (CCFCLYRKSC…PDRVRLLPAP (341 aa)) are cytoplasmic. C2 domains follow at residues 108 to 227 (ELGR…QAWR) and 239 to 372 (KLGD…AQWH). Ca(2+) is bound by residues Leu-138, Asp-139, Asp-145, Asp-197, Phe-198, Asp-199, Ser-202, Asp-205, Asp-270, Asp-276, Asp-330, and Asp-332.

The protein belongs to the synaptotagmin family. In terms of assembly, homodimer. Interacts with both alpha- and beta-tubulin. The cofactor is Ca(2+).

The protein localises to the cytoplasmic vesicle. The protein resides in the secretory vesicle. Its subcellular location is the synaptic vesicle membrane. It is found in the recycling endosome membrane. Functionally, may be involved in Ca(2+)-dependent exocytosis of secretory vesicles through Ca(2+) and phospholipid binding to the C2 domain or may serve as Ca(2+) sensors in the process of vesicular trafficking and exocytosis. Regulates the Ca(2+)-dependent secretion of norepinephrine in PC12 cells. Required for export from the endocytic recycling compartment to the cell surface. The chain is Synaptotagmin-5 (SYT5) from Homo sapiens (Human).